Reading from the N-terminus, the 198-residue chain is Putative pseudouridine methyltransferase (198 aa).

S-adenosyl-L-methionine contacts are provided by M132 and C186.

Belongs to the methyltransferase superfamily. TrmY family.

Its subcellular location is the cytoplasm. The chain is Putative pseudouridine methyltransferase from Shewanella baltica (strain OS223).